Here is a 275-residue protein sequence, read N- to C-terminus: Tropinone reductase-like 2 (275 aa).

An NAD(+)-binding site is contributed by 17–41; that stretch reads IITGGASGIGACTAELFHENGAKVV. S150 serves as a coordination point for substrate. The active-site Proton acceptor is Y163.

This sequence belongs to the short-chain dehydrogenases/reductases (SDR) family.

Its function is as follows. Has no tropinone reductase activity. The chain is Tropinone reductase-like 2 from Erythroxylum coca (Coca plant).